The following is a 90-amino-acid chain: DNA-directed RNA polymerase subunit omega (90 aa).

The interval 69 to 90 (RQEQQEQDAAELAAVSSITHNR) is disordered.

It belongs to the RNA polymerase subunit omega family. The RNAP catalytic core consists of 2 alpha, 1 beta, 1 beta' and 1 omega subunit. When a sigma factor is associated with the core the holoenzyme is formed, which can initiate transcription.

It carries out the reaction RNA(n) + a ribonucleoside 5'-triphosphate = RNA(n+1) + diphosphate. Its function is as follows. Promotes RNA polymerase assembly. Latches the N- and C-terminal regions of the beta' subunit thereby facilitating its interaction with the beta and alpha subunits. The sequence is that of DNA-directed RNA polymerase subunit omega from Aliivibrio salmonicida (strain LFI1238) (Vibrio salmonicida (strain LFI1238)).